The sequence spans 388 residues: Galactokinase (388 aa).

Position 33–36 (33–36) interacts with substrate; the sequence is EHTD. Residues Ser67 and 125–131 contribute to the ATP site; that span reads GAGLSSS. Mg(2+) is bound by residues Ser131 and Glu163. Asp175 acts as the Proton acceptor in catalysis. Residue Tyr225 coordinates substrate.

Belongs to the GHMP kinase family. GalK subfamily.

Its subcellular location is the cytoplasm. The catalysed reaction is alpha-D-galactose + ATP = alpha-D-galactose 1-phosphate + ADP + H(+). It functions in the pathway carbohydrate metabolism; galactose metabolism. In terms of biological role, catalyzes the transfer of the gamma-phosphate of ATP to D-galactose to form alpha-D-galactose-1-phosphate (Gal-1-P). The sequence is that of Galactokinase from Limosilactobacillus fermentum (strain NBRC 3956 / LMG 18251) (Lactobacillus fermentum).